A 249-amino-acid chain; its full sequence is Coproheme decarboxylase (249 aa).

Residue Tyr-145 is part of the active site. Fe-coproporphyrin III-binding positions include 145 to 149 and His-172; that span reads YPMAR.

It belongs to the ChdC family. Type 1 subfamily. It depends on Fe-coproporphyrin III as a cofactor.

The catalysed reaction is Fe-coproporphyrin III + 2 H2O2 + 2 H(+) = heme b + 2 CO2 + 4 H2O. It catalyses the reaction Fe-coproporphyrin III + H2O2 + H(+) = harderoheme III + CO2 + 2 H2O. It carries out the reaction harderoheme III + H2O2 + H(+) = heme b + CO2 + 2 H2O. It participates in porphyrin-containing compound metabolism; protoheme biosynthesis. In terms of biological role, involved in coproporphyrin-dependent heme b biosynthesis. Catalyzes the decarboxylation of Fe-coproporphyrin III (coproheme) to heme b (protoheme IX), the last step of the pathway. The reaction occurs in a stepwise manner with a three-propionate intermediate. The protein is Coproheme decarboxylase of Oceanobacillus iheyensis (strain DSM 14371 / CIP 107618 / JCM 11309 / KCTC 3954 / HTE831).